Reading from the N-terminus, the 516-residue chain is ADP-ribosylation factor GTPase-activating protein 3 (516 aa).

One can recognise an Arf-GAP domain in the interval 10–126; that stretch reads LTIFKRLRSV…IKSLASQATR (117 aa). Residues 25-48 form a C4-type zinc finger; the sequence is CFDCGAKNPSWASITYGVFLCIDC. Positions 170–199 are disordered; sequence AEPSSLTSRPAETTLENNEGGQEQGPCVEG. Polar residues predominate over residues 173–190; the sequence is SSLTSRPAETTLENNEGG. Phosphoserine is present on S231. Residues 243 to 264 adopt a coiled-coil conformation; it reads NEIEKQAQAADKMKEQEDLAKA. S270, S274, S331, and S370 each carry phosphoserine. The disordered stretch occupies residues 393-417; sequence TTGYSDRPTARHKPDYEPVENTDEA. Phosphoserine occurs at positions 428, 451, 453, 455, 457, and 458.

It localises to the cytoplasm. The protein resides in the golgi apparatus membrane. With respect to regulation, GAP activity stimulated by phosphatidylinositol 4,5-bisphosphate (PIP2). In terms of biological role, GTPase-activating protein (GAP) for ADP ribosylation factor 1 (ARF1). Hydrolysis of ARF1-bound GTP may lead to dissociation of coatomer from Golgi-derived membranes to allow fusion with target membranes. The polypeptide is ADP-ribosylation factor GTPase-activating protein 3 (Pongo abelii (Sumatran orangutan)).